The following is a 71-amino-acid chain: uncharacterized protein (71 aa).

Residues Phe-24–Leu-44 form a helical membrane-spanning segment.

It is found in the membrane. This is an uncharacterized protein from Schizosaccharomyces pombe (strain 972 / ATCC 24843) (Fission yeast).